A 122-amino-acid chain; its full sequence is UPF0102 protein Ping_1176 (122 aa).

The protein belongs to the UPF0102 family.

This Psychromonas ingrahamii (strain DSM 17664 / CCUG 51855 / 37) protein is UPF0102 protein Ping_1176.